We begin with the raw amino-acid sequence, 445 residues long: Putative ankyrin repeat protein L797 (445 aa).

4 ANK repeats span residues Phe73–Ser102, Asn285–Gly314, Asn315–Gln344, and Leu346–Ile375.

The sequence is that of Putative ankyrin repeat protein L797 from Acanthamoeba polyphaga (Amoeba).